Consider the following 204-residue polypeptide: Threonylcarbamoyl-AMP synthase (204 aa).

Residues 10–204 form the YrdC-like domain; that stretch reads ADELDLVANY…KDLLAGHILR (195 aa).

The protein belongs to the SUA5 family. TsaC subfamily.

Its subcellular location is the cytoplasm. The enzyme catalyses L-threonine + hydrogencarbonate + ATP = L-threonylcarbamoyladenylate + diphosphate + H2O. Functionally, required for the formation of a threonylcarbamoyl group on adenosine at position 37 (t(6)A37) in tRNAs that read codons beginning with adenine. Catalyzes the conversion of L-threonine, HCO(3)(-)/CO(2) and ATP to give threonylcarbamoyl-AMP (TC-AMP) as the acyladenylate intermediate, with the release of diphosphate. This Moraxella catarrhalis (strain BBH18) protein is Threonylcarbamoyl-AMP synthase.